The chain runs to 209 residues: Potassium-transporting ATPase KdpC subunit (209 aa).

Residues 18 to 38 traverse the membrane as a helical segment; sequence MLAVFTLFGLGLAYSLVATGI.

This sequence belongs to the KdpC family. As to quaternary structure, the system is composed of three essential subunits: KdpA, KdpB and KdpC.

It localises to the cell inner membrane. Part of the high-affinity ATP-driven potassium transport (or Kdp) system, which catalyzes the hydrolysis of ATP coupled with the electrogenic transport of potassium into the cytoplasm. This subunit acts as a catalytic chaperone that increases the ATP-binding affinity of the ATP-hydrolyzing subunit KdpB by the formation of a transient KdpB/KdpC/ATP ternary complex. In Xanthomonas oryzae pv. oryzae (strain MAFF 311018), this protein is Potassium-transporting ATPase KdpC subunit.